The following is a 112-amino-acid chain: Colipase (112 aa).

Residues 1-17 (MEKILILLLVALSVAYA) form the signal peptide. The propeptide at 18 to 22 (APGPR) is enterostatin, activation peptide. Disulfide bonds link cysteine 34/cysteine 45, cysteine 40/cysteine 56, cysteine 44/cysteine 78, cysteine 66/cysteine 86, and cysteine 80/cysteine 104.

This sequence belongs to the colipase family. In terms of assembly, forms a 1:1 stoichiometric complex with pancreatic lipase. In terms of tissue distribution, expressed by the pancreas.

Its subcellular location is the secreted. Functionally, colipase is a cofactor of pancreatic lipase. It allows the lipase to anchor itself to the lipid-water interface. Without colipase the enzyme is washed off by bile salts, which have an inhibitory effect on the lipase. Enterostatin has a biological activity as a satiety signal. This is Colipase from Homo sapiens (Human).